The chain runs to 717 residues: ATP-dependent zinc metalloprotease FtsH (717 aa).

Residues 1–9 (MKNASRIFK) are Cytoplasmic-facing. Residues 10–30 (GPLIWILLCIGLIIVFLQFAG) form a helical membrane-spanning segment. Residues 31-111 (SGNGYKDIPT…SWQGENPGQS (81 aa)) are Extracellular-facing. Residues 112–132 (IWKALLINFLPFVIILLFFLW) form a helical membrane-spanning segment. Residues 133–717 (AMNAAQGMGG…NGNPWGPPRS (585 aa)) are Cytoplasmic-facing. 207–214 (GPPGTGKT) is a binding site for ATP. His-429 provides a ligand contact to Zn(2+). Glu-430 is an active-site residue. Residues His-433 and Asp-505 each coordinate Zn(2+). Residues 617-717 (AFTGSDKRVP…NGNPWGPPRS (101 aa)) are disordered. Positions 691–717 (PEPPSPTHPGEGPQPPSNGNPWGPPRS) are enriched in pro residues.

In the central section; belongs to the AAA ATPase family. It in the C-terminal section; belongs to the peptidase M41 family. Homohexamer. Zn(2+) is required as a cofactor.

The protein localises to the cell membrane. Its function is as follows. Acts as a processive, ATP-dependent zinc metallopeptidase for both cytoplasmic and membrane proteins. Plays a role in the quality control of integral membrane proteins. This is ATP-dependent zinc metalloprotease FtsH from Cutibacterium acnes (strain SK137) (Propionibacterium acnes).